The primary structure comprises 1434 residues: DNA-directed RNA polymerase subunit beta' (1434 aa).

Residues Cys70, Cys72, Cys85, and Cys88 each contribute to the Zn(2+) site. Mg(2+)-binding residues include Asp460, Asp462, and Asp464. Zn(2+)-binding residues include Cys840, Cys915, Cys922, and Cys925.

Belongs to the RNA polymerase beta' chain family. In terms of assembly, the RNAP catalytic core consists of 2 alpha, 1 beta, 1 beta' and 1 omega subunit. When a sigma factor is associated with the core the holoenzyme is formed, which can initiate transcription. It depends on Mg(2+) as a cofactor. Requires Zn(2+) as cofactor.

The catalysed reaction is RNA(n) + a ribonucleoside 5'-triphosphate = RNA(n+1) + diphosphate. Functionally, DNA-dependent RNA polymerase catalyzes the transcription of DNA into RNA using the four ribonucleoside triphosphates as substrates. The sequence is that of DNA-directed RNA polymerase subunit beta' from Aeromonas hydrophila subsp. hydrophila (strain ATCC 7966 / DSM 30187 / BCRC 13018 / CCUG 14551 / JCM 1027 / KCTC 2358 / NCIMB 9240 / NCTC 8049).